Consider the following 397-residue polypeptide: Zinc finger transcription factor family protein 30 (397 aa).

The disordered stretch occupies residues 1–40 (MKLEDDKIHSPTNTEEEGYGSDVEVENGTDISGSKGGSGV). Residues 14-27 (TEEEGYGSDVEVEN) show a composition bias toward acidic residues. 3 consecutive C2H2-type zinc fingers follow at residues 51-74 (FRCS…MQAH), 78-102 (YKCT…KQHH), and 107-125 (YMCR…LHIH).

The protein localises to the nucleus. The polypeptide is Zinc finger transcription factor family protein 30 (ztf-30) (Caenorhabditis elegans).